A 349-amino-acid polypeptide reads, in one-letter code: NADH-ubiquinone oxidoreductase chain 2 (349 aa).

9 helical membrane passes run 3–23, 66–86, 98–118, 139–159, 178–198, 199–219, 240–260, 274–294, and 319–339; these read PYVL…TFAS, AAAM…EWEI, VMLA…LPEV, FALM…TIGL, ILAY…QFAP, SLTL…FLTL, LAAL…LSGF, GLPL…YFYL, and FTMI…LLPL.

It belongs to the complex I subunit 2 family.

The protein localises to the mitochondrion inner membrane. It catalyses the reaction a ubiquinone + NADH + 5 H(+)(in) = a ubiquinol + NAD(+) + 4 H(+)(out). Functionally, core subunit of the mitochondrial membrane respiratory chain NADH dehydrogenase (Complex I) that is believed to belong to the minimal assembly required for catalysis. Complex I functions in the transfer of electrons from NADH to the respiratory chain. The immediate electron acceptor for the enzyme is believed to be ubiquinone. This Oncorhynchus mykiss (Rainbow trout) protein is NADH-ubiquinone oxidoreductase chain 2 (MT-ND2).